We begin with the raw amino-acid sequence, 1891 residues long: TATA-binding protein-associated factor mot1 (1891 aa).

One copy of the HEAT 1 repeat lies at 30 to 68 (PDELFNLLGRILPYLRSKSWDTRAAAAKAIGLIVANADT). Disordered stretches follow at residues 184–216 (FVAS…LSKR), 241–283 (LSSR…LDRS), and 295–316 (FKGA…EGPN). Residues 264–275 (ENGEERNGDSKP) are compositionally biased toward basic and acidic residues. 2 HEAT repeats span residues 473–511 (SKLM…EFVK) and 569–606 (SSFG…LEGE). Residues 699 to 710 (SAAAPARSSPAS) are compositionally biased toward low complexity. Residues 699-740 (SAAAPARSSPASNTPEGTKGRRRKSEKKEAPPPSAHNVDGHM) form a disordered region. HEAT repeat units lie at residues 957–996 (PKKP…YYTT), 1139–1177 (YPWV…VITV), 1181–1216 (TMLV…VMED), and 1219–1257 (LPYV…LVPL). The Helicase ATP-binding domain maps to 1316-1489 (AFLNRYNLHG…WSLFDFLMPG (174 aa)). Position 1329-1336 (1329-1336 (DDMGLGKT)) interacts with ATP. The DEAH box motif lies at 1440 to 1443 (DEGH). An HEAT 8 repeat occupies 1526-1565 (EALHKQVLPFLLRRLKEEVLNDLPPKIIQNYYCDPSELQR). Residues 1663 to 1813 (DLSGASYVSP…STVVNQQNAG (151 aa)) form the Helicase C-terminal domain.

It belongs to the SNF2/RAD54 helicase family. In terms of assembly, forms the NCT transcriptional regulatory complex with nctA and nctB.

The protein resides in the nucleus. Its function is as follows. Regulates transcription in association with TATA binding protein (TBP). Removes TBP from the TATA box via its C-terminal ATPase activity. Both transcription activation and repression require its ATPase activity. Part of the NCT transcriptional regulatory complex that acts as a key regulator of ergosterol biosynthesis and the azole exporter cdr1B. The NCT complex binds the promoters of genes linked to azole susceptibility, and especially represses the expression of cdr1B transporter. This Aspergillus fumigatus (strain ATCC MYA-4609 / CBS 101355 / FGSC A1100 / Af293) (Neosartorya fumigata) protein is TATA-binding protein-associated factor mot1.